A 481-amino-acid polypeptide reads, in one-letter code: Sialic acid-binding Ig-like lectin 16 (481 aa).

An N-terminal signal peptide occupies residues 1–16 (MLLLPLLLPVLGAGSL). Over 17-434 (NKDPSYSLQV…VHCKSGPMTG (418 aa)) the chain is Extracellular. In terms of domain architecture, Ig-like V-type spans 19-122 (DPSYSLQVQR…DEAWYFFRVE (104 aa)). 4 disulfides stabilise this stretch: Cys-37-Cys-174, Cys-42-Cys-102, Cys-165-Cys-216, and Cys-259-Cys-306. Residues Asn-43 and Asn-78 are each glycosylated (N-linked (GlcNAc...) asparagine). Arg-120 provides a ligand contact to N-acetylneuraminate. 3 consecutive Ig-like C2-type domains span residues 147-232 (PDVY…RTVR), 238-322 (LELQ…LDLS), and 327-424 (PENL…LSFS). N-linked (GlcNAc...) asparagine glycosylation is found at Asn-338 and Asn-347. The cysteines at positions 363 and 408 are disulfide-linked. The chain crosses the membrane as a helical span at residues 435–455 (VVLVAVGEVAMKILLLCLCLI). Over 456 to 481 (LLRVRSCRRKAARAALGMEAADAVTD) the chain is Cytoplasmic.

The protein belongs to the immunoglobulin superfamily. SIGLEC (sialic acid binding Ig-like lectin) family. Expressed in bone marrow, fetal brain, fetal liver, lung and salivary gland. Detected in brain, macrophage, cancerous esophagus and lung at protein level.

It localises to the membrane. Its function is as follows. Putative adhesion molecule that mediates sialic-acid dependent binding to cells. The protein is Sialic acid-binding Ig-like lectin 16 (SIGLEC16) of Homo sapiens (Human).